The chain runs to 201 residues: 3-isopropylmalate dehydratase small subunit (201 aa).

It belongs to the LeuD family. LeuD type 1 subfamily. Heterodimer of LeuC and LeuD.

It carries out the reaction (2R,3S)-3-isopropylmalate = (2S)-2-isopropylmalate. It functions in the pathway amino-acid biosynthesis; L-leucine biosynthesis; L-leucine from 3-methyl-2-oxobutanoate: step 2/4. Functionally, catalyzes the isomerization between 2-isopropylmalate and 3-isopropylmalate, via the formation of 2-isopropylmaleate. The chain is 3-isopropylmalate dehydratase small subunit from Klebsiella pneumoniae (strain 342).